The following is a 472-amino-acid chain: Radical SAM cyclopropyl synthase TigE (472 aa).

In terms of domain architecture, Radical SAM core spans Gly106–Asp331. [4Fe-4S] cluster is bound by residues Cys120, Cys124, Cys127, Tyr339, Cys360, Cys378, Cys414, Cys417, Cys423, Cys427, and Cys446.

The protein belongs to the radical SAM superfamily. It depends on [4Fe-4S] cluster as a cofactor.

The enzyme catalyses L-isoleucyl-[protein] + AH2 + 2 S-adenosyl-L-methionine = methylcyclopropylglycine-[protein] + 2 5'-deoxyadenosine + 2 L-methionine + A + 2 H(+). Its function is as follows. Radical S-adenosylmethionine (SAM) enzyme that catalyzes the formation of methylcyclopropylglycine (mCPG) residues from isoleucine residues residing in the repeating TIGSVS motif of the precursor peptide TigB. Is thus involved in the maturation of a ribosomally synthesized and post-translationally modified peptide (RiPP). The chain is Radical SAM cyclopropyl synthase TigE from Paramaledivibacter caminithermalis (strain DSM 15212 / CIP 107654 / DViRD3) (Clostridium caminithermale).